A 1235-amino-acid chain; its full sequence is Phosphorylase b kinase regulatory subunit alpha, liver isoform (1235 aa).

Residues 636 to 655 form a disordered region; it reads FSPDSEPDLGGYLEDSSPQE. Serine 695, serine 729, and serine 735 each carry phosphoserine. The tract at residues 807 to 837 is calmodulin-binding; sequence LSELYGKAGLNQEWSLIRYISGLLRKKVEVL. Phosphoserine is present on residues serine 983, serine 1015, and serine 1044. The interval 1033 to 1060 is disordered; it reads SIKSVRSSTPSSPTGTSSTDSGGQHLGW. A compositionally biased stretch (low complexity) spans 1039 to 1055; sequence SSTPSSPTGTSSTDSGG. The segment at 1059–1099 is calmodulin-binding; sequence GWGEQQGQWLRRRRLDGAINRVPVGFYQKVWKILQKCHGLS. Cysteine 1232 carries the S-farnesyl cysteine lipid modification.

It belongs to the phosphorylase b kinase regulatory chain family. As to quaternary structure, hexadecamer of 4 heterotetramers, each composed of alpha, beta, gamma, and delta subunits. Alpha (PHKA1 or PHKA2) and beta (PHKB) are regulatory subunits, gamma (PHKG1 or PHKG2) is the catalytic subunit, and delta is calmodulin. In terms of processing, although the final Cys may be farnesylated, the terminal tripeptide is probably not removed, and the C-terminus is not methylated.

Its subcellular location is the cell membrane. It participates in glycan biosynthesis; glycogen metabolism. Its activity is regulated as follows. By phosphorylation of various serine residues and by calcium. In terms of biological role, phosphorylase b kinase catalyzes the phosphorylation of serine in certain substrates, including troponin I. The alpha chain may bind calmodulin. The protein is Phosphorylase b kinase regulatory subunit alpha, liver isoform (Phka2) of Mus musculus (Mouse).